The following is a 529-amino-acid chain: Peptide chain release factor 3 (529 aa).

The region spanning 11–280 (AKRRTFAIIS…GLVEWAPAPM (270 aa)) is the tr-type G domain. Residues 20 to 27 (SHPDAGKT), 88 to 92 (DTPGH), and 142 to 145 (NKLD) each bind GTP.

The protein belongs to the TRAFAC class translation factor GTPase superfamily. Classic translation factor GTPase family. PrfC subfamily.

The protein resides in the cytoplasm. In terms of biological role, increases the formation of ribosomal termination complexes and stimulates activities of RF-1 and RF-2. It binds guanine nucleotides and has strong preference for UGA stop codons. It may interact directly with the ribosome. The stimulation of RF-1 and RF-2 is significantly reduced by GTP and GDP, but not by GMP. In Klebsiella pneumoniae subsp. pneumoniae (strain ATCC 700721 / MGH 78578), this protein is Peptide chain release factor 3.